The primary structure comprises 251 residues: Protein crossbronx (251 aa).

One can recognise a UBC core domain in the interval 20–176 (QQEYKILAEY…TRENIRESLA (157 aa)). Positions 211-251 (QSKHLESQSQQSNNGGNGGGGGAATGLSWVKEGEFKPLSVE) are disordered. Over residues 225–234 (GGNGGGGGAA) the composition is skewed to gly residues.

It belongs to the ubiquitin-conjugating enzyme family. FTS subfamily.

In Drosophila willistoni (Fruit fly), this protein is Protein crossbronx (cbx).